A 136-amino-acid polypeptide reads, in one-letter code: uncharacterized protein (136 aa).

It belongs to the mimivirus L163/R849 family.

This is an uncharacterized protein from Acanthamoeba polyphaga mimivirus (APMV).